The sequence spans 426 residues: D-tagatose-1,6-bisphosphate aldolase subunit KbaZ (426 aa).

Belongs to the GatZ/KbaZ family. KbaZ subfamily. In terms of assembly, forms a complex with KbaY.

It participates in carbohydrate metabolism; D-tagatose 6-phosphate degradation; D-glyceraldehyde 3-phosphate and glycerone phosphate from D-tagatose 6-phosphate: step 2/2. Component of the tagatose-1,6-bisphosphate aldolase KbaYZ that is required for full activity and stability of the Y subunit. Could have a chaperone-like function for the proper and stable folding of KbaY. When expressed alone, KbaZ does not show any aldolase activity. The chain is D-tagatose-1,6-bisphosphate aldolase subunit KbaZ from Escherichia coli (strain 55989 / EAEC).